We begin with the raw amino-acid sequence, 261 residues long: Chanoclavine-I dehydrogenase easD (261 aa).

Residues 1 to 20 (MPSMTSKVFAITGGASGIGA) form the signal peptide. Ile18 lines the NADP(+) pocket. An N-linked (GlcNAc...) asparagine glycan is attached at Asn43. Asp66, Arg132, Tyr166, Lys170, and Thr201 together coordinate NADP(+). The Proton donor role is filled by Tyr166. Lys170 functions as the Lowers pKa of active site Tyr in the catalytic mechanism.

It belongs to the short-chain dehydrogenases/reductases (SDR) family. In terms of assembly, homotetramer.

The catalysed reaction is chanoclavine-I + NAD(+) = chanoclavine-I aldehyde + NADH + H(+). The protein operates within alkaloid biosynthesis; ergot alkaloid biosynthesis. Chanoclavine-I dehydrogenase; part of the gene cluster that mediates the biosynthesis of fungal ergot alkaloid. DmaW catalyzes the first step of ergot alkaloid biosynthesis by condensing dimethylallyl diphosphate (DMAP) and tryptophan to form 4-dimethylallyl-L-tryptophan. The second step is catalyzed by the methyltransferase easF that methylates 4-dimethylallyl-L-tryptophan in the presence of S-adenosyl-L-methionine, resulting in the formation of 4-dimethylallyl-L-abrine. The catalase easC and the FAD-dependent oxidoreductase easE then transform 4-dimethylallyl-L-abrine to chanoclavine-I which is further oxidized by easD in the presence of NAD(+), resulting in the formation of chanoclavine-I aldehyde. Agroclavine dehydrogenase easG then mediates the conversion of chanoclavine-I aldehyde to agroclavine via a non-enzymatic adduct reaction: the substrate is an iminium intermediate that is formed spontaneously from chanoclavine-I aldehyde in the presence of glutathione. The presence of easA is not required to complete this reaction. Further conversion of agroclavine to paspalic acid is a two-step process involving oxidation of agroclavine to elymoclavine and of elymoclavine to paspalic acid, the second step being performed by the elymoclavine oxidase cloA. Paspalic acid is then further converted to D-lysergic acid. Ergopeptines are assembled from D-lysergic acid and three different amino acids by the D-lysergyl-peptide-synthetases composed each of a monomudular and a trimodular nonribosomal peptide synthetase subunit. LpsB and lpsC encode the monomodular subunits responsible for D-lysergic acid activation and incorporation into the ergopeptine backbone. LpsA1 and A2 subunits encode the trimodular nonribosomal peptide synthetase assembling the tripeptide portion of ergopeptines. LpsA1 is responsible for formation of the major ergopeptine, ergotamine, and lpsA2 for alpha-ergocryptine, the minor ergopeptine of the total alkaloid mixture elaborated by C.purpurea. D-lysergyl-tripeptides are assembled by the nonribosomal peptide synthetases and released as N-(D-lysergyl-aminoacyl)-lactams. Cyclolization of the D-lysergyl-tripeptides is performed by the Fe(2+)/2-ketoglutarate-dependent dioxygenase easH which introduces a hydroxyl group into N-(D-lysergyl-aminoacyl)-lactam at alpha-C of the aminoacyl residue followed by spontaneous condensation with the terminal lactam carbonyl group. This Claviceps purpurea (strain 20.1) (Ergot fungus) protein is Chanoclavine-I dehydrogenase easD.